Reading from the N-terminus, the 230-residue chain is 5'-methylthioadenosine/S-adenosylhomocysteine nucleosidase (230 aa).

Residue E12 is the Proton acceptor of the active site. Substrate is bound by residues G78, M153, and 174–175 (ME). The Proton donor role is filled by D198.

The protein belongs to the PNP/UDP phosphorylase family. MtnN subfamily.

The enzyme catalyses S-adenosyl-L-homocysteine + H2O = S-(5-deoxy-D-ribos-5-yl)-L-homocysteine + adenine. It carries out the reaction S-methyl-5'-thioadenosine + H2O = 5-(methylsulfanyl)-D-ribose + adenine. The catalysed reaction is 5'-deoxyadenosine + H2O = 5-deoxy-D-ribose + adenine. It participates in amino-acid biosynthesis; L-methionine biosynthesis via salvage pathway; S-methyl-5-thio-alpha-D-ribose 1-phosphate from S-methyl-5'-thioadenosine (hydrolase route): step 1/2. Its function is as follows. Catalyzes the irreversible cleavage of the glycosidic bond in both 5'-methylthioadenosine (MTA) and S-adenosylhomocysteine (SAH/AdoHcy) to adenine and the corresponding thioribose, 5'-methylthioribose and S-ribosylhomocysteine, respectively. Also cleaves 5'-deoxyadenosine, a toxic by-product of radical S-adenosylmethionine (SAM) enzymes, into 5-deoxyribose and adenine. This Tolumonas auensis (strain DSM 9187 / NBRC 110442 / TA 4) protein is 5'-methylthioadenosine/S-adenosylhomocysteine nucleosidase.